An 82-amino-acid polypeptide reads, in one-letter code: Delta-ctenitoxin-Pn2c (82 aa).

Positions 1-17 (MKVAILFLSILVLAVAS) are cleaved as a signal peptide. The propeptide occupies 18-34 (ESIEESRDDFAVEELGR). Disulfide bonds link Cys37–Cys51, Cys44–Cys57, Cys48–Cys80, Cys50–Cys65, and Cys59–Cys63.

In terms of tissue distribution, expressed by the venom gland.

The protein resides in the secreted. Reversible inhibitor of voltage-gated sodium channels (Nav). Delays the fast inactivation kinetics of neuronal-type sodium channels. In vivo, it induces rat penile erection. This effect may be due to the neuronal nitric oxide synthase (NOS1), since one of its selective inhibitor completely abolishes all the toxic effects of the toxin. This toxin also causes scratching, lacrimation, hypersalivation, sweating and agitation followed by spastic paralysis of the anterior and posterior extremities and death at dose levels of 0.24 mg/mouse. It is also insecticidal to the larval and adult forms of the house fly. This chain is Delta-ctenitoxin-Pn2c, found in Phoneutria nigriventer (Brazilian armed spider).